The following is a 150-amino-acid chain: D-aminoacyl-tRNA deacylase (150 aa).

Residues 136-137 (GP) carry the Gly-cisPro motif, important for rejection of L-amino acids motif.

Belongs to the DTD family. In terms of assembly, homodimer.

The protein resides in the cytoplasm. The catalysed reaction is glycyl-tRNA(Ala) + H2O = tRNA(Ala) + glycine + H(+). It catalyses the reaction a D-aminoacyl-tRNA + H2O = a tRNA + a D-alpha-amino acid + H(+). An aminoacyl-tRNA editing enzyme that deacylates mischarged D-aminoacyl-tRNAs. Also deacylates mischarged glycyl-tRNA(Ala), protecting cells against glycine mischarging by AlaRS. Acts via tRNA-based rather than protein-based catalysis; rejects L-amino acids rather than detecting D-amino acids in the active site. By recycling D-aminoacyl-tRNA to D-amino acids and free tRNA molecules, this enzyme counteracts the toxicity associated with the formation of D-aminoacyl-tRNA entities in vivo and helps enforce protein L-homochirality. The chain is D-aminoacyl-tRNA deacylase from Staphylococcus aureus (strain MRSA252).